A 79-amino-acid polypeptide reads, in one-letter code: Cell division protein ZapB (79 aa).

Positions 4–78 (EVFEKLEAKV…LRALLGKMEE (75 aa)) form a coiled coil.

Belongs to the ZapB family. Homodimer. The ends of the coiled-coil dimer bind to each other, forming polymers. Interacts with FtsZ.

It localises to the cytoplasm. Non-essential, abundant cell division factor that is required for proper Z-ring formation. It is recruited early to the divisome by direct interaction with FtsZ, stimulating Z-ring assembly and thereby promoting cell division earlier in the cell cycle. Its recruitment to the Z-ring requires functional FtsA or ZipA. This chain is Cell division protein ZapB, found in Pectobacterium atrosepticum (strain SCRI 1043 / ATCC BAA-672) (Erwinia carotovora subsp. atroseptica).